The chain runs to 238 residues: Putative type I specificity subunit S.MpnORF201P (238 aa).

It belongs to the type-I restriction system S methylase family. As to quaternary structure, the methyltransferase is composed of M and S polypeptides.

Functionally, the specificity (S) subunit of a type I methyltransferase (MTase); this subunit dictates DNA sequence specificity. The single R subunit has multiple frameshifts and is probably not expressed. The protein is Putative type I specificity subunit S.MpnORF201P of Mycoplasma pneumoniae (strain ATCC 29342 / M129 / Subtype 1) (Mycoplasmoides pneumoniae).